Reading from the N-terminus, the 589-residue chain is O-fucosyltransferase 11 (589 aa).

The segment at M1 to R37 is disordered. A compositionally biased stretch (low complexity) spans N10–G23. Residues M68–V88 traverse the membrane as a helical; Signal-anchor for type II membrane protein segment. N-linked (GlcNAc...) asparagine glycosylation is found at N112, N136, and N239. Residue H332–R334 coordinates substrate. N-linked (GlcNAc...) asparagine glycans are attached at residues N405, N406, and N564.

Belongs to the glycosyltransferase GT106 family.

The protein localises to the membrane. Its pathway is glycan metabolism. This is O-fucosyltransferase 11 from Arabidopsis thaliana (Mouse-ear cress).